The following is a 341-amino-acid chain: CD2 antigen cytoplasmic tail-binding protein 2 (341 aa).

The tract at residues 1-66 (MPKRKVTFQG…DGGSSKYDIL (66 aa)) is disordered. Lys26 participates in a covalent cross-link: Glycyl lysine isopeptide (Lys-Gly) (interchain with G-Cter in SUMO2). N6-acetyllysine is present on Lys44. Ser46, Ser49, and Ser118 each carry phosphoserine. Acidic residues predominate over residues 49–58 (SDEEEDDDDG). 2 disordered regions span residues 131–151 (RPPG…GQTS) and 178–199 (LGAR…PQRL). Residues Ser194 and Ser195 each carry the phosphoserine modification. A GYF domain is found at 280-338 (DVMWEYKWENTGDAELYGPFTSAQMQTWVSEGYFPDGVYCRKLDPPGGQFYNSKRIDFD).

In terms of assembly, component of the U5 snRNP complex composed of the U5 snRNA and at least PRPF6, PRPF8, SNRNP200, EFTUD2, SNRNP40, DDX23, TXNL4A and CD2BP2. Interacts directly with TXNL4A and PRPF6. Interacts (via GYF domain) with CD2 (via Pro-rich sequence in the cytoplasmic domain). Interacts with PQBP1.

Its subcellular location is the cytoplasm. The protein localises to the nucleus. Functionally, involved in pre-mRNA splicing as component of the U5 snRNP complex that is involved in spliceosome assembly. The protein is CD2 antigen cytoplasmic tail-binding protein 2 (CD2BP2) of Homo sapiens (Human).